Consider the following 99-residue polypeptide: Large ribosomal subunit protein bL27 (99 aa).

Positions 1–9 (MLLMNLQLF) are excised as a propeptide.

The protein belongs to the bacterial ribosomal protein bL27 family. In terms of processing, the N-terminus is cleaved by ribosomal processing cysteine protease Prp.

In Clostridium novyi (strain NT), this protein is Large ribosomal subunit protein bL27.